Consider the following 410-residue polypeptide: Porin-like protein GalP (410 aa).

The N-terminal stretch at 1 to 25 (MKCRTLYPLVPTFALAASLPLQALA) is a signal peptide.

It belongs to the outer membrane porin (Opr) (TC 1.B.25) family.

In terms of biological role, probable transporter, possibly involved in the gallate degradation pathway. May play a role in the uptake of low gallate concentrations that may exist in the natural habitats of P.putida. This Pseudomonas putida (strain ATCC 47054 / DSM 6125 / CFBP 8728 / NCIMB 11950 / KT2440) protein is Porin-like protein GalP (galP).